The chain runs to 735 residues: 1,4-alpha-glucan branching enzyme GlgB 1 (735 aa).

D418 functions as the Nucleophile in the catalytic mechanism. Catalysis depends on E471, which acts as the Proton donor.

This sequence belongs to the glycosyl hydrolase 13 family. GlgB subfamily. Monomer.

The catalysed reaction is Transfers a segment of a (1-&gt;4)-alpha-D-glucan chain to a primary hydroxy group in a similar glucan chain.. It participates in glycan biosynthesis; glycogen biosynthesis. Its function is as follows. Catalyzes the formation of the alpha-1,6-glucosidic linkages in glycogen by scission of a 1,4-alpha-linked oligosaccharide from growing alpha-1,4-glucan chains and the subsequent attachment of the oligosaccharide to the alpha-1,6 position. The polypeptide is 1,4-alpha-glucan branching enzyme GlgB 1 (Rhizobium johnstonii (strain DSM 114642 / LMG 32736 / 3841) (Rhizobium leguminosarum bv. viciae)).